Consider the following 429-residue polypeptide: Glutamyl-tRNA reductase (429 aa).

Substrate is bound by residues 49-52 (TCNR), S107, 112-114 (EPQ), and Q118. The active-site Nucleophile is the C50. 187-192 (GAGKTI) contacts NADP(+).

It belongs to the glutamyl-tRNA reductase family. In terms of assembly, homodimer.

It catalyses the reaction (S)-4-amino-5-oxopentanoate + tRNA(Glu) + NADP(+) = L-glutamyl-tRNA(Glu) + NADPH + H(+). It functions in the pathway porphyrin-containing compound metabolism; protoporphyrin-IX biosynthesis; 5-aminolevulinate from L-glutamyl-tRNA(Glu): step 1/2. Its function is as follows. Catalyzes the NADPH-dependent reduction of glutamyl-tRNA(Glu) to glutamate 1-semialdehyde (GSA). The polypeptide is Glutamyl-tRNA reductase (Marinobacter nauticus (strain ATCC 700491 / DSM 11845 / VT8) (Marinobacter aquaeolei)).